The primary structure comprises 225 residues: 3-dehydroquinate dehydratase (225 aa).

3-dehydroquinate-binding positions include serine 6, glutamate 30–arginine 32, and arginine 62. Histidine 118 acts as the Proton donor/acceptor in catalysis. The Schiff-base intermediate with substrate role is filled by lysine 143. Arginine 186, threonine 205, and glutamine 209 together coordinate 3-dehydroquinate.

The protein belongs to the type-I 3-dehydroquinase family. As to quaternary structure, homodimer.

The catalysed reaction is 3-dehydroquinate = 3-dehydroshikimate + H2O. Its pathway is metabolic intermediate biosynthesis; chorismate biosynthesis; chorismate from D-erythrose 4-phosphate and phosphoenolpyruvate: step 3/7. Involved in the third step of the chorismate pathway, which leads to the biosynthesis of aromatic amino acids. Catalyzes the cis-dehydration of 3-dehydroquinate (DHQ) and introduces the first double bond of the aromatic ring to yield 3-dehydroshikimate. This Streptococcus gordonii (strain Challis / ATCC 35105 / BCRC 15272 / CH1 / DL1 / V288) protein is 3-dehydroquinate dehydratase.